Here is a 308-residue protein sequence, read N- to C-terminus: Protoheme IX farnesyltransferase (308 aa).

Transmembrane regions (helical) follow at residues 31 to 51 (VIEL…RGTV), 53 to 73 (PLLI…ANAL), 102 to 122 (NALV…WWTT), 124 to 144 (LLSG…YTLL), 149 to 169 (TSQN…IGWS), 170 to 190 (AVTG…FFWT), 240 to 260 (LALA…VWFL), and 288 to 308 (YLAV…PHLF).

It belongs to the UbiA prenyltransferase family. Protoheme IX farnesyltransferase subfamily.

The protein localises to the cell membrane. It catalyses the reaction heme b + (2E,6E)-farnesyl diphosphate + H2O = Fe(II)-heme o + diphosphate. The protein operates within porphyrin-containing compound metabolism; heme O biosynthesis; heme O from protoheme: step 1/1. Functionally, converts heme B (protoheme IX) to heme O by substitution of the vinyl group on carbon 2 of heme B porphyrin ring with a hydroxyethyl farnesyl side group. The sequence is that of Protoheme IX farnesyltransferase from Mycobacterium avium (strain 104).